A 209-amino-acid chain; its full sequence is Na(+)-translocating NADH-quinone reductase subunit D (209 aa).

5 consecutive transmembrane segments (helical) span residues 42–62, 72–92, 103–123, 131–151, and 178–198; these read LVMT…ISLI, IIVQ…ILQA, VFVG…AYAM, FMDG…VGFL, and NGLF…IWGL.

The protein belongs to the NqrDE/RnfAE family. As to quaternary structure, composed of six subunits; NqrA, NqrB, NqrC, NqrD, NqrE and NqrF.

It is found in the cell inner membrane. The catalysed reaction is a ubiquinone + n Na(+)(in) + NADH + H(+) = a ubiquinol + n Na(+)(out) + NAD(+). Its function is as follows. NQR complex catalyzes the reduction of ubiquinone-1 to ubiquinol by two successive reactions, coupled with the transport of Na(+) ions from the cytoplasm to the periplasm. NqrA to NqrE are probably involved in the second step, the conversion of ubisemiquinone to ubiquinol. This is Na(+)-translocating NADH-quinone reductase subunit D from Photorhabdus laumondii subsp. laumondii (strain DSM 15139 / CIP 105565 / TT01) (Photorhabdus luminescens subsp. laumondii).